Here is a 237-residue protein sequence, read N- to C-terminus: Ribitol-5-phosphate cytidylyltransferase (237 aa).

CTP-binding positions include 7–10 (LAGG) and 80–86 (GEDRNET).

Belongs to the IspD/TarI cytidylyltransferase family. TarI subfamily.

The catalysed reaction is D-ribitol 5-phosphate + CTP + H(+) = CDP-L-ribitol + diphosphate. The protein operates within cell wall biogenesis; poly(ribitol phosphate) teichoic acid biosynthesis. Its function is as follows. Catalyzes the transfer of the cytidylyl group of CTP to D-ribitol 5-phosphate. The protein is Ribitol-5-phosphate cytidylyltransferase of Listeria innocua serovar 6a (strain ATCC BAA-680 / CLIP 11262).